The chain runs to 128 residues: Large ribosomal subunit protein bL17 (128 aa).

This sequence belongs to the bacterial ribosomal protein bL17 family. In terms of assembly, part of the 50S ribosomal subunit. Contacts protein L32.

In Streptococcus equi subsp. equi (strain 4047), this protein is Large ribosomal subunit protein bL17.